The chain runs to 608 residues: Kelch-like protein 10 (608 aa).

One can recognise a BTB domain in the interval 39–106; it reads CDVVIKVNGF…AYTRTVPITP (68 aa). 6 Kelch repeats span residues 292–339, 340–386, 388–433, 434–480, 481–527, and 529–574; these read ILFA…YLKG, YVYI…VLSN, IYAM…TLYG, KVYI…AYGE, HVYA…VVDD, and LFVV…VVPG. Phosphoserine is present on serine 501.

In terms of assembly, self-associates. Interacts with CUL3; indicative for the participation in an E3 ubiquitin ligase complex.

The protein localises to the cytoplasm. It functions in the pathway protein modification; protein ubiquitination. Functionally, may be a substrate-specific adapter of a CUL3-based E3 ubiquitin-protein ligase complex which mediates the ubiquitination and subsequent proteasomal degradation of target proteins during spermatogenesis. This chain is Kelch-like protein 10 (Klhl10), found in Rattus norvegicus (Rat).